Consider the following 427-residue polypeptide: Transcobalamin-2 (427 aa).

An N-terminal signal peptide occupies residues 1 to 18 (MRHLGAFLFLLGVLGALT). Intrachain disulfides connect Cys21–Cys267, Cys83–Cys96, Cys116–Cys309, and Cys165–Cys205. Residues Gln104, 152-156 (TSYYQ), His190, 190-194 (HHSVD), Asn242, Ser245, Gln291, and 395-397 (WQL) contribute to the cob(II)alamin site.

This sequence belongs to the eukaryotic cobalamin transport proteins family. In terms of assembly, interacts with CD320 (via LDL-receptor class A domains).

It is found in the secreted. In terms of biological role, primary vitamin B12-binding and transport protein. Delivers cobalamin to cells. This is Transcobalamin-2 (TCN2) from Homo sapiens (Human).